Here is an 89-residue protein sequence, read N- to C-terminus: Acyl carrier protein MbtL (89 aa).

A Carrier domain is found at 7 to 82; sequence ESVSAALTEI…DLEAAIQAKV (76 aa). Serine 42 bears the O-(pantetheine 4'-phosphoryl)serine mark.

Post-translationally, 4'-phosphopantetheine is transferred from CoA to a specific serine of apo-ACP, leading to the activated holo-ACP form.

The protein localises to the cytoplasm. It participates in siderophore biosynthesis; mycobactin biosynthesis. Acyl carrier protein involved in the formation of acyl-S-ACP intermediates within the mycobactin biosynthesis process. The protein is Acyl carrier protein MbtL (mbtL) of Mycobacterium sp. (strain MCS).